Consider the following 316-residue polypeptide: Secondary metabolism regulator laeA (316 aa).

This sequence belongs to the methyltransferase superfamily. LaeA methyltransferase family. Component of the heterotrimeric velvet complex composed of laeA, veA and velB; VeA acting as a bridging protein between laeA and velB.

The protein localises to the nucleus. It catalyses the reaction L-methionyl-[protein] + S-adenosyl-L-methionine = S-methyl-L-methionyl-[protein] + S-adenosyl-L-homocysteine. Methyltransferase that performs automethylation. No other methyl-accepting substrate has been identified yet. Component of the velvet transcription factor complex that acts as a global regulator for secondary metabolite gene expression. Controls the biosynthetic gene cluster for beauvericin, a depsipeptide mycotoxin that functions as a virulence determinant. The velvet complex also regulates chromatin structure and transcription of siderophore biosynthetic genes and is required for infection of tomato plants. The velvet complex also governs expression of nitrate metabolism genes. The chain is Secondary metabolism regulator laeA from Fusarium oxysporum f. sp. lycopersici (strain 4287 / CBS 123668 / FGSC 9935 / NRRL 34936) (Fusarium vascular wilt of tomato).